Consider the following 553-residue polypeptide: MQQVLENLTELPSSTGAEEIDLIFLKGIMENPIVKSLAKAHERLEDSKLEAVSDNNLELVNEILEDITPLISVDENVAELVGILKEPHFQSLLEAHDIVASKCYDSPPSSPEMNIPSLNNQLPVDAIRILGIHKKAGEPLGVTFRVENNDLVIARILHGGMIDRQGLLHVGDIIKEVNGHEVGNNPKELQELLKNISGSVTLKILPSYRDTITPQQSYVNMERHPAHVRQVFVKCHFDYNPFNDNLIPCKEAGLKFSKGEILQIVNREDPNWWQASHVKEGGSAGLIPSQFLEEKRKAFVRRDWDNSGPFCGTISNKKKKKMMYLTTRNAEFDRHEIQIYEEVAKMPPFQRKTLVLIGAQGVGRRSLKNRFIVLNPARFGTTVPFTSRKPREDEKDGQAYKFVSRSEMEADIKAGKYLEHGEYEGNLYGTKIDSILEVVQTGRTCILDVNPQALKVLRTSEFMPYVVFIAAPELETLRAMHKAVVDAGITTKLLTDSDLKKTVDESARIQRAYNHYFDLIIVNDNLDKAFEKLQTAIEKLRMEPQWVPISWVY.

2 consecutive L27 domains span residues 1-48 and 49-107; these read MQQV…EDSK and LEAV…YDSP. Residues 129–208 enclose the PDZ domain; the sequence is ILGIHKKAGE…SVTLKILPSY (80 aa). The 70-residue stretch at 228 to 297 folds into the SH3 domain; the sequence is VRQVFVKCHF…PSQFLEEKRK (70 aa). The region spanning 351–538 is the Guanylate kinase-like domain; the sequence is RKTLVLIGAQ…AFEKLQTAIE (188 aa). Tyr-513 is subject to Phosphotyrosine.

The protein belongs to the MAGUK family. As to quaternary structure, interacts with CADM1. Interacts with the LIN7 proteins.

The protein resides in the membrane. This chain is Protein PALS2, found in Mus musculus (Mouse).